The sequence spans 467 residues: Chromosomal replication initiator protein DnaA (467 aa).

A domain I, interacts with DnaA modulators region spans residues 1 to 90 (MSLSLWQQCL…KPVTQTPQAA (90 aa)). The interval 91–130 (VTSNVAAPAQVAQTQPQRAAPSTRSGWDNVPAPAEPTYRS) is domain II. Positions 98-111 (PAQVAQTQPQRAAP) are enriched in low complexity. The interval 98–119 (PAQVAQTQPQRAAPSTRSGWDN) is disordered. Positions 131–347 (NVNVKHTFDN…GALNRVIANA (217 aa)) are domain III, AAA+ region. Residues glycine 175, glycine 177, lysine 178, and threonine 179 each coordinate ATP. The tract at residues 348–467 (NFTGRAITID…FSNLIRTLSS (120 aa)) is domain IV, binds dsDNA.

The protein belongs to the DnaA family. In terms of assembly, oligomerizes as a right-handed, spiral filament on DNA at oriC.

The protein localises to the cytoplasm. Functionally, plays an essential role in the initiation and regulation of chromosomal replication. ATP-DnaA binds to the origin of replication (oriC) to initiate formation of the DNA replication initiation complex once per cell cycle. Binds the DnaA box (a 9 base pair repeat at the origin) and separates the double-stranded (ds)DNA. Forms a right-handed helical filament on oriC DNA; dsDNA binds to the exterior of the filament while single-stranded (ss)DNA is stabiized in the filament's interior. The ATP-DnaA-oriC complex binds and stabilizes one strand of the AT-rich DNA unwinding element (DUE), permitting loading of DNA polymerase. After initiation quickly degrades to an ADP-DnaA complex that is not apt for DNA replication. Binds acidic phospholipids. The sequence is that of Chromosomal replication initiator protein DnaA from Shigella sonnei (strain Ss046).